Here is a 23-residue protein sequence, read N- to C-terminus: Caerin-4.1 (23 aa).

As to expression, expressed by the skin parotoid and/or rostral glands.

The protein localises to the secreted. Functionally, antibacterial peptide, that adopts an alpha helical conformation which can disrupt bacterial membranes. Each caerin displays a different antimicrobial specificity. The polypeptide is Caerin-4.1 (Ranoidea caerulea (Green tree frog)).